Consider the following 355-residue polypeptide: Homeobox protein knotted-1-like LET6 (355 aa).

The tract at residues Pro75–Ile96 is disordered. The segment covering Asn79–Ile96 has biased composition (low complexity). Residues Glu237–Phe257 form the ELK domain. The segment at residues Met258–Ser321 is a DNA-binding region (homeobox; TALE-type).

Belongs to the TALE/KNOX homeobox family. As to expression, expressed in developing lateral organs and developing ovaries in flowers.

It localises to the nucleus. In terms of biological role, may have a role to play in formative events in ovule and embryo morphogenesis. Probably binds to the DNA sequence 5'-TGAC-3'. The protein is Homeobox protein knotted-1-like LET6 (LET6) of Solanum lycopersicum (Tomato).